The primary structure comprises 198 residues: Synaptobrevin homolog YKT6 (198 aa).

The Longin domain maps to 8-126 (VLYKGEAKVV…TIHYPALDGH (119 aa)). The v-SNARE coiled-coil homology domain occupies 138 to 198 (PMTKVQAELD…RKQNSCCAIM (61 aa)). Ser159 is modified (phosphoserine). Residue Cys194 is the site of S-palmitoyl cysteine attachment. Residue Cys195 is modified to Cysteine methyl ester. Cys195 is lipidated: S-farnesyl cysteine. The propeptide at 196–198 (AIM) is removed in mature form.

This sequence belongs to the synaptobrevin family. In terms of assembly, identified in 2 different SNARE complexes; the first one composed of GOSR1, GOSR2 and STX5 and the second one composed of BET1L, GOSR1 and STX5. Palmitoylated; catalyzes its own palmitoylation. Palmitoylation is required for Golgi targeting. In terms of processing, farnesylation is required for Golgi targeting.

Its subcellular location is the cytoplasm. It localises to the cytosol. The protein resides in the cytoplasmic vesicle membrane. The protein localises to the golgi apparatus membrane. Its function is as follows. Vesicular soluble NSF attachment protein receptor (v-SNARE) mediating vesicle docking and fusion to a specific acceptor cellular compartment. Functions in endoplasmic reticulum to Golgi transport; as part of a SNARE complex composed of GOSR1, GOSR2 and STX5. Functions in early/recycling endosome to TGN transport; as part of a SNARE complex composed of BET1L, GOSR1 and STX5. Has a S-palmitoyl transferase activity. The chain is Synaptobrevin homolog YKT6 (YKT6) from Homo sapiens (Human).